The chain runs to 621 residues: uncharacterized protein (621 aa).

A phosphoserine mark is found at S269, S271, S274, S290, and S292. LRR repeat units lie at residues 333 to 354 (QLLY…VFLS), 357 to 379 (SLVS…GELP), 380 to 401 (QLCS…YHIS), 404 to 425 (HLQI…ENVP), 426 to 447 (SLEK…RRLV), and 451 to 472 (NFEE…YRIT). Residues 552-581 (SKNASGGDTSSNVSLLNGSASEEIPQNTES) form a disordered region.

The protein resides in the cytoplasm. It is found in the nucleus. The protein localises to the vacuole membrane. This is an uncharacterized protein from Schizosaccharomyces pombe (strain 972 / ATCC 24843) (Fission yeast).